A 500-amino-acid chain; its full sequence is Galactose/methyl galactoside import ATP-binding protein MglA (500 aa).

2 consecutive ABC transporter domains span residues 8–243 (LEME…VGRD) and 257–500 (EMIL…AKYL). 40-47 (GENGAGKS) serves as a coordination point for ATP.

It belongs to the ABC transporter superfamily. Galactose/methyl galactoside importer (TC 3.A.1.2.3) family. In terms of assembly, the complex is composed of one ATP-binding protein (MglA), two transmembrane proteins (MglC) and a solute-binding protein (MglB).

It localises to the cell inner membrane. The enzyme catalyses D-galactose(out) + ATP + H2O = D-galactose(in) + ADP + phosphate + H(+). The catalysed reaction is methyl beta-D-galactoside(out) + ATP + H2O = methyl beta-D-galactoside(in) + ADP + phosphate + H(+). Part of the ABC transporter complex MglABC involved in galactose/methyl galactoside import. Responsible for energy coupling to the transport system. This is Galactose/methyl galactoside import ATP-binding protein MglA from Fusobacterium nucleatum subsp. nucleatum (strain ATCC 25586 / DSM 15643 / BCRC 10681 / CIP 101130 / JCM 8532 / KCTC 2640 / LMG 13131 / VPI 4355).